Reading from the N-terminus, the 788-residue chain is MRARPRPRPLWATVLALGALAGVGVGGPNICTTRGVSSCQQCLAVSPMCAWCSDEALPLGSPRCDLKENLLKDNCAPESIEFPVSEARVLEDRPLSDKGSGDSSQVTQVSPQRIALRLRPDDSKNFSIQVRQVEDYPVDIYYLMDLSYSMKDDLWSIQNLGTKLATQMRKLTSNLRIGFGAFVDKPVSPYMYISPPEALENPCYDMKTTCLPMFGYKHVLTLTDQVTRFNEEVKKQSVSRNRDAPEGGFDAIMQATVCDEKIGWRNDASHLLVFTTDAKTHIALDGRLAGIVQPNDGQCHVGSDNHYSASTTMDYPSLGLMTEKLSQKNINLIFAVTENVVNLYQNYSELIPGTTVGVLSMDSSNVLQLIVDAYGKIRSKVELEVRDLPEELSLSFNATCLNNEVIPGLKSCMGLKIGDTVSFSIEAKVRGCPQEKEKSFTIKPVGFKDSLIVQVTFDCDCACQAQAEPNSHRCNNGNGTFECGVCRCGPGWLGSQCECSEEDYRPSQQDECSPREGQPVCSQRGECLCGQCVCHSSDFGKITGKYCECDDFSCVRYKGEMCSGHGQCSCGDCLCDSDWTGYYCNCTTRTDTCMSSNGLLCSGRGKCECGSCVCIQPGSYGDTCEKCPTCPDACTFKKECVECKKFDRGALHDENTCNRYCRDEIESVKELKDTGKDAVNCTYKNEDDCVVRFQYYEDSSGKSILYVVEEPECPKGPDILVVLLSVMGAILLIGLAALLIWKLLITIHDRKEFAKFEEERARAKWDTANNPLYKEATSTFTNITYRGT.

An N-terminal signal peptide occupies residues 1-26; the sequence is MRARPRPRPLWATVLALGALAGVGVG. Over 27–718 the chain is Extracellular; the sequence is GPNICTTRGV…EEPECPKGPD (692 aa). Residues 30 to 76 form the PSI domain; that stretch reads ICTTRGVSSCQQCLAVSPMCAWCSDEALPLGSPRCDLKENLLKDNCA. Disulfide bonds link Cys31–Cys49, Cys39–Cys461, Cys42–Cys64, Cys52–Cys75, Cys203–Cys210, Cys258–Cys299, Cys400–Cys412, Cys432–Cys459, Cys463–Cys483, Cys474–Cys486, Cys488–Cys497, Cys499–Cys529, Cys512–Cys527, Cys521–Cys532, Cys534–Cys547, Cys549–Cys570, Cys554–Cys568, Cys562–Cys573, and Cys575–Cys584. An N-linked (GlcNAc...) asparagine glycan is attached at Asn125. One can recognise a VWFA domain in the interval 135-377; the sequence is DYPVDIYYLM…QLIVDAYGKI (243 aa). Mg(2+) contacts are provided by Ser147 and Ser149. Positions 149, 152, 153, and 184 each coordinate Ca(2+). Residues 203-210 are involved in CX3CL1-, NRG1-, FGF1- and IGF1-binding; it reads CYDMKTTC. The Ca(2+) site is built by Asn241, Asp243, Pro245, Glu246, and Asp277. Mg(2+) is bound at residue Glu246. The tract at residues 293–313 is CX3CL1-binding; it reads QPNDGQCHVGSDNHYSASTTM. Residue Asn346 is glycosylated (N-linked (GlcNAc...) asparagine). Met361 lines the Ca(2+) pocket. N-linked (GlcNAc...) asparagine glycosylation is present at Asn397. I-EGF domains are found at residues 463 to 498, 499 to 548, 549 to 585, and 586 to 625; these read CQAQAEPNSHRCNNGNGTFECGVCRCGPGWLGSQCE, CSEE…KYCE, CDDFSCVRYKGEMCSGHGQCSCGDCLCDSDWTGYYCN, and CTTRTDTCMSSNGLLCSGRGKCECGSCVCIQPGSYGDTCE. The N-linked (GlcNAc...) asparagine glycan is linked to Asn478. N-linked (GlcNAc...) asparagine glycosylation is present at Asn585. Cystine bridges form between Cys586/Cys609, Cys593/Cys607, Cys601/Cys612, Cys614/Cys624, Cys627/Cys630, Cys634/Cys681, Cys640/Cys661, Cys643/Cys657, and Cys689/Cys713. Asn680 carries an N-linked (GlcNAc...) asparagine glycan. Residues 719–741 form a helical membrane-spanning segment; it reads ILVVLLSVMGAILLIGLAALLIW. The Cytoplasmic segment spans residues 742–788; the sequence is KLLITIHDRKEFAKFEEERARAKWDTANNPLYKEATSTFTNITYRGT. Thr767 is modified (phosphothreonine). Tyr773 is subject to Phosphotyrosine. The short motif at 777–783 is the LIR element; it reads TSTFTNI. The residue at position 779 (Thr779) is a Phosphothreonine; by PDPK1 and PKB/AKT1; in vitro. Tyr785 is modified (phosphotyrosine).

The protein belongs to the integrin beta chain family. In terms of assembly, heterodimer of an alpha and a beta subunit. Beta-3 (ITGB3) associates with either alpha-IIb (ITGA2B) or alpha-V (ITGAV). Isoform Beta-3C interacts with FLNB. Interacts with COMP. Interacts with PDIA6 following platelet stimulation. Interacts with SYK; upon activation by ITGB3 promotes platelet adhesion. Interacts with MYO10. Interacts with DAB2. Interacts with FERMT2. Interacts with EMP2; regulates the levels of the heterodimer ITGA5:ITGB3 integrin expression on the plasma membrane. Integrin ITGAV:ITGB3 interacts with FBLN5 (via N-terminus). ITGAV:ITGB3 interacts with CCN3. ITGAV:ITGB3 and ITGA2B:ITGB3 interact with SELP (via C-type lectin domain); the interaction mediates cell-cell interaction and adhesion. ITGAV:ITGB3 is found in a ternary complex with CX3CR1 and CX3CL1. ITGAV:ITGB3 is found in a ternary complex with NRG1 and ERBB3. ITGAV:ITGB3 is found in a ternary complex with FGF1 and FGFR1. ITGAV:ITGB3 interacts with FGF2; it is likely that FGF2 can simultaneously bind ITGAV:ITGB3 and FGF receptors. ITGAV:ITGB3 binds to IL1B. ITGAV:ITGB3 is found in a ternary complex with IGF1 and IGF1R. ITGAV:ITGB3 interacts with IGF2. ITGAV:ITGB3 interacts with FBN1. ITGAV:ITGB3 interacts with CD9, CD81 and CD151 (via second extracellular domain). Interacts (via the allosteric site (site 2)) with CXCL12 in a CXCR4-independent manner. Interacts with MXRA8/DICAM; the interaction inhibits ITGAV:ITGB3 heterodimer formation. ITGAV:ITGB3 interacts with PTN. Forms a complex with PTPRZ1 and PTN that stimulates endothelial cell migration through ITGB3 Tyr-773 phosphorylation. ITGAV:ITGB3 interacts with SLC6A4. Interacts with SLC6A4 (via C-terminus); this interaction regulates SLC6A4 trafficking. ITGA2B:ITGB3 interacts with PPIA/CYPA; the interaction is ROS and PPIase activity-dependent and is increased in the presence of thrombin. Interacts with tensin TNS3; TNS3 also interacts with PEAK1, thus acting as an adapter molecule to bridge the association of PEAK1 with ITGB3. Interacts with TM4SF19. (Microbial infection) Integrin ITGAV:ITGB3 interacts with herpes virus 8/HHV-8 glycoprotein B. As to quaternary structure, (Microbial infection) Integrin ITGAV:ITGB3 interacts with coxsackievirus A9 capsid proteins. In terms of assembly, (Microbial infection) Interacts with Hantaan virus glycoprotein G. (Microbial infection) Integrin ITGAV:ITGB3 interacts with cytomegalovirus/HHV-5 gH:gL proteins. As to quaternary structure, (Microbial infection) Integrin ITGA5:ITGB3 interacts with human metapneumovirus fusion protein. In terms of assembly, (Microbial infection) Integrin ITGAV:ITGB3 interacts with human parechovirus 1 capsid proteins. (Microbial infection) Integrin ITGAV:ITGB3 interacts with west nile virus envelope protein E. As to quaternary structure, (Microbial infection) Interacts with HIV-1 Tat. ITGAV:ITGB3 interacts with AGRA2. Post-translationally, phosphorylated on tyrosine residues in response to thrombin-induced platelet aggregation. Probably involved in outside-in signaling. A peptide (AA 740-762) is capable of binding GRB2 only when both Tyr-773 and Tyr-785 are phosphorylated. Phosphorylation of Thr-779 inhibits SHC binding. As to expression, isoform beta-3A and isoform beta-3C are widely expressed. Isoform beta-3A is specifically expressed in osteoblast cells; isoform beta-3C is specifically expressed in prostate and testis.

It is found in the cell membrane. It localises to the cell projection. The protein localises to the lamellipodium membrane. The protein resides in the cell junction. Its subcellular location is the focal adhesion. It is found in the postsynaptic cell membrane. It localises to the synapse. In terms of biological role, integrin alpha-V/beta-3 (ITGAV:ITGB3) is a receptor for cytotactin, fibronectin, laminin, matrix metalloproteinase-2, osteopontin, osteomodulin, prothrombin, thrombospondin, vitronectin and von Willebrand factor. Integrin alpha-IIb/beta-3 (ITGA2B:ITGB3) is a receptor for fibronectin, fibrinogen, plasminogen, prothrombin, thrombospondin and vitronectin. Integrins alpha-IIb/beta-3 and alpha-V/beta-3 recognize the sequence R-G-D in a wide array of ligands. Integrin alpha-IIb/beta-3 recognizes the sequence H-H-L-G-G-G-A-K-Q-A-G-D-V in fibrinogen gamma chain. Following activation integrin alpha-IIb/beta-3 brings about platelet/platelet interaction through binding of soluble fibrinogen. This step leads to rapid platelet aggregation which physically plugs ruptured endothelial surface. Fibrinogen binding enhances SELP expression in activated platelets. ITGAV:ITGB3 binds to fractalkine (CX3CL1) and acts as its coreceptor in CX3CR1-dependent fractalkine signaling. ITGAV:ITGB3 binds to NRG1 (via EGF domain) and this binding is essential for NRG1-ERBB signaling. ITGAV:ITGB3 binds to FGF1 and this binding is essential for FGF1 signaling. ITGAV:ITGB3 binds to FGF2 and this binding is essential for FGF2 signaling. ITGAV:ITGB3 binds to IGF1 and this binding is essential for IGF1 signaling. ITGAV:ITGB3 binds to IGF2 and this binding is essential for IGF2 signaling. ITGAV:ITGB3 binds to IL1B and this binding is essential for IL1B signaling. ITGAV:ITGB3 binds to PLA2G2A via a site (site 2) which is distinct from the classical ligand-binding site (site 1) and this induces integrin conformational changes and enhanced ligand binding to site 1. ITGAV:ITGB3 acts as a receptor for fibrillin-1 (FBN1) and mediates R-G-D-dependent cell adhesion to FBN1. In brain, plays a role in synaptic transmission and plasticity. Involved in the regulation of the serotonin neurotransmission, is required to localize to specific compartments within the synapse the serotonin receptor SLC6A4 and for an appropriate reuptake of serotonin. Controls excitatory synaptic strength by regulating GRIA2-containing AMPAR endocytosis, which affects AMPAR abundance and composition. ITGAV:ITGB3 act as a receptor for CD40LG. ITGAV:ITGB3 acts as a receptor for IBSP and promotes cell adhesion and migration to IBSP. Its function is as follows. (Microbial infection) Integrin ITGAV:ITGB3 acts as a receptor for Herpes virus 8/HHV-8. (Microbial infection) Integrin ITGAV:ITGB3 acts as a receptor for Coxsackievirus A9. Functionally, (Microbial infection) Acts as a receptor for Hantaan virus. In terms of biological role, (Microbial infection) Integrin ITGAV:ITGB3 acts as a receptor for Cytomegalovirus/HHV-5. Its function is as follows. (Microbial infection) Integrin ITGA5:ITGB3 acts as a receptor for Human metapneumovirus. (Microbial infection) Integrin ITGAV:ITGB3 acts aP05556s a receptor for Human parechovirus 1. Functionally, (Microbial infection) Integrin ITGAV:ITGB3 acts as a receptor for West nile virus. In terms of biological role, (Microbial infection) In case of HIV-1 infection, the interaction with extracellular viral Tat protein seems to enhance angiogenesis in Kaposi's sarcoma lesions. The sequence is that of Integrin beta-3 from Homo sapiens (Human).